The sequence spans 252 residues: Octanoyltransferase (252 aa).

The region spanning 56–237 (ADTGDEIWLV…RLIANLDGAS (182 aa)) is the BPL/LPL catalytic domain. Substrate-binding positions include 96–103 (RGGQITYH), 168–170 (ALG), and 181–183 (GLS). Residue Cys199 is the Acyl-thioester intermediate of the active site.

It belongs to the LipB family.

The protein resides in the cytoplasm. The enzyme catalyses octanoyl-[ACP] + L-lysyl-[protein] = N(6)-octanoyl-L-lysyl-[protein] + holo-[ACP] + H(+). It participates in protein modification; protein lipoylation via endogenous pathway; protein N(6)-(lipoyl)lysine from octanoyl-[acyl-carrier-protein]: step 1/2. Functionally, catalyzes the transfer of endogenously produced octanoic acid from octanoyl-acyl-carrier-protein onto the lipoyl domains of lipoate-dependent enzymes. Lipoyl-ACP can also act as a substrate although octanoyl-ACP is likely to be the physiological substrate. The polypeptide is Octanoyltransferase (Burkholderia lata (strain ATCC 17760 / DSM 23089 / LMG 22485 / NCIMB 9086 / R18194 / 383)).